The chain runs to 229 residues: MPVRFDCFVTGTDTEIGKTLASAALLTALAGAGYRTAGLKPVAAGTLAGAPERTNEDIEQLRAAATVGLPMATLCPWLLDAPMSPHLAARRAGVTITLPPIVDALAQARTQADAVVVEGVGGFRVPLSDTFDTAQLAVALGLPVVLVVGLRLGCLNHAALTAEAIAARGLRLAGWIGNVVDATMAGLDDNVATLRRWIDAPHLGTIPRLPRPDARLAASHVDIAPLLAR.

An ATP-binding site is contributed by 15–20 (EIGKTL). A Mg(2+)-binding site is contributed by threonine 19. Residue lysine 40 is part of the active site. Residues aspartate 57, 118 to 121 (EGVG), and 207 to 209 (PRL) each bind ATP. Residues aspartate 57 and glutamate 118 each coordinate Mg(2+).

It belongs to the dethiobiotin synthetase family. Homodimer. Requires Mg(2+) as cofactor.

Its subcellular location is the cytoplasm. The catalysed reaction is (7R,8S)-7,8-diammoniononanoate + CO2 + ATP = (4R,5S)-dethiobiotin + ADP + phosphate + 3 H(+). Its pathway is cofactor biosynthesis; biotin biosynthesis; biotin from 7,8-diaminononanoate: step 1/2. Its function is as follows. Catalyzes a mechanistically unusual reaction, the ATP-dependent insertion of CO2 between the N7 and N8 nitrogen atoms of 7,8-diaminopelargonic acid (DAPA, also called 7,8-diammoniononanoate) to form a ureido ring. This Ralstonia nicotianae (strain ATCC BAA-1114 / GMI1000) (Ralstonia solanacearum) protein is ATP-dependent dethiobiotin synthetase BioD.